The chain runs to 189 residues: UPF0301 protein Plut_0637 (189 aa).

The protein belongs to the UPF0301 (AlgH) family.

In Chlorobium luteolum (strain DSM 273 / BCRC 81028 / 2530) (Pelodictyon luteolum), this protein is UPF0301 protein Plut_0637.